A 445-amino-acid chain; its full sequence is Serine protease inhibitor A3F (445 aa).

N-linked (GlcNAc...) asparagine glycosylation is found at Asn-28, Asn-94, Asn-174, and Asn-259. Positions 357–382 are RCL; it reads GTEAAAGTGYQNLQCCQGVIYSMKIY.

It belongs to the serpin family.

This Mus musculus (Mouse) protein is Serine protease inhibitor A3F (Serpina3f).